Here is a 144-residue protein sequence, read N- to C-terminus: Large ribosomal subunit protein uL11 (144 aa).

This sequence belongs to the universal ribosomal protein uL11 family. As to quaternary structure, part of the ribosomal stalk of the 50S ribosomal subunit. Interacts with L10 and the large rRNA to form the base of the stalk. L10 forms an elongated spine to which L12 dimers bind in a sequential fashion forming a multimeric L10(L12)X complex. Post-translationally, one or more lysine residues are methylated.

In terms of biological role, forms part of the ribosomal stalk which helps the ribosome interact with GTP-bound translation factors. This is Large ribosomal subunit protein uL11 from Streptomyces sp. (strain FRI-5).